A 318-amino-acid polypeptide reads, in one-letter code: Ribose-phosphate pyrophosphokinase (318 aa).

ATP is bound by residues 43-45 and 102-103; these read DGE and RQ. The Mg(2+) site is built by histidine 136 and aspartate 176. Residue lysine 199 is part of the active site. Residues arginine 201, aspartate 225, and 229–233 each bind D-ribose 5-phosphate; that span reads DTAGT.

Belongs to the ribose-phosphate pyrophosphokinase family. Class I subfamily. Homohexamer. Mg(2+) is required as a cofactor.

The protein localises to the cytoplasm. The catalysed reaction is D-ribose 5-phosphate + ATP = 5-phospho-alpha-D-ribose 1-diphosphate + AMP + H(+). It functions in the pathway metabolic intermediate biosynthesis; 5-phospho-alpha-D-ribose 1-diphosphate biosynthesis; 5-phospho-alpha-D-ribose 1-diphosphate from D-ribose 5-phosphate (route I): step 1/1. In terms of biological role, involved in the biosynthesis of the central metabolite phospho-alpha-D-ribosyl-1-pyrophosphate (PRPP) via the transfer of pyrophosphoryl group from ATP to 1-hydroxyl of ribose-5-phosphate (Rib-5-P). The sequence is that of Ribose-phosphate pyrophosphokinase from Listeria ivanovii.